A 361-amino-acid polypeptide reads, in one-letter code: Teichoic acids export ATP-binding protein TagH (361 aa).

The 234-residue stretch at 13-246 folds into the ABC transporter domain; the sequence is TKEYDLYKSQ…YREFTKWFKG (234 aa). 60-67 serves as a coordination point for ATP; that stretch reads GVNGSGKS. The segment at 247–361 is unknown; it reads QSKKEKKHFQ…HDTNATSGVK (115 aa).

The protein belongs to the ABC transporter superfamily. Teichoic acids exporter (TC 3.A.1.104.1) family. In terms of assembly, the complex is composed of two ATP-binding proteins (TagH) and two transmembrane proteins (TagG).

It localises to the cell membrane. It carries out the reaction ATP + H2O + teichoic acidSide 1 = ADP + phosphate + teichoic acidSide 2.. Functionally, part of the ABC transporter complex TagGH involved in teichoic acids export. Responsible for energy coupling to the transport system. The sequence is that of Teichoic acids export ATP-binding protein TagH from Levilactobacillus brevis (strain ATCC 367 / BCRC 12310 / CIP 105137 / JCM 1170 / LMG 11437 / NCIMB 947 / NCTC 947) (Lactobacillus brevis).